The sequence spans 95 residues: Membrane protein insertion and folding monitor (95 aa).

A helical membrane pass occupies residues 12–32; sequence LFLVDFFTIILPALTAIGIAF. Residues 86-89 form a crucial for elongation arrest region; that stretch reads DEED.

It localises to the cell membrane. Functionally, sensor protein that up-regulates translation of the secondary membrane protein insertase (MisCB/YqjG) when activity of the primary membrane protein insertase (MisCA/SpoIIIJ) is limited. Acts as a ribosome-nascent chain complex. When the primary membrane protein insertase activity or level is reduced, the membrane insertion of MifM is impaired, which induces arrest of MifM translation and unfolding of the mRNA hairpin. Unfolding leads to translation of the downstream gene, which encodes the secondary membrane protein insertase MisCB/YqjG. Translation arrest of MifM is mediated by interaction of its C-terminal domain with the ribosomal polypeptide exit tunnel. Undergoes multisite stalling, which may allow a sufficient duration of ribosomal stalling and consequently sufficient levels of MisCB/YqjG. The polypeptide is Membrane protein insertion and folding monitor (mifM) (Bacillus subtilis (strain 168)).